The chain runs to 428 residues: Glutamate-1-semialdehyde 2,1-aminomutase 1 (428 aa).

At K268 the chain carries N6-(pyridoxal phosphate)lysine.

It belongs to the class-III pyridoxal-phosphate-dependent aminotransferase family. HemL subfamily. Homodimer. Pyridoxal 5'-phosphate serves as cofactor.

The protein localises to the cytoplasm. It catalyses the reaction (S)-4-amino-5-oxopentanoate = 5-aminolevulinate. It participates in porphyrin-containing compound metabolism; protoporphyrin-IX biosynthesis; 5-aminolevulinate from L-glutamyl-tRNA(Glu): step 2/2. This chain is Glutamate-1-semialdehyde 2,1-aminomutase 1, found in Bacillus cereus (strain G9842).